The sequence spans 178 residues: Peptidyl-prolyl cis-trans isomerase H (178 aa).

Residues 14–177 enclose the PPIase cyclophilin-type domain; sequence FFDISIGDVP…LPVKITECGQ (164 aa).

Belongs to the cyclophilin-type PPIase family. PPIase H subfamily.

The protein resides in the nucleus. It catalyses the reaction [protein]-peptidylproline (omega=180) = [protein]-peptidylproline (omega=0). PPIases accelerate the folding of proteins. It catalyzes the cis-trans isomerization of proline imidic peptide bonds in oligopeptides. The sequence is that of Peptidyl-prolyl cis-trans isomerase H (cyp7) from Rhizopus delemar (strain RA 99-880 / ATCC MYA-4621 / FGSC 9543 / NRRL 43880) (Mucormycosis agent).